Consider the following 101-residue polypeptide: Urease subunit beta 1 (101 aa).

Belongs to the urease beta subunit family. Heterotrimer of UreA (gamma), UreB (beta) and UreC (alpha) subunits. Three heterotrimers associate to form the active enzyme.

Its subcellular location is the cytoplasm. The catalysed reaction is urea + 2 H2O + H(+) = hydrogencarbonate + 2 NH4(+). Its pathway is nitrogen metabolism; urea degradation; CO(2) and NH(3) from urea (urease route): step 1/1. Disruption of the ure1 gene cluster suggests that it protects brucellae during their passage through the stomach. The major route of infection in human brucellosis is oral. The protein is Urease subunit beta 1 of Brucella abortus (strain 2308).